The sequence spans 130 residues: Small ribosomal subunit protein uS17m (130 aa).

Residues 1-20 (MSVVRSSVHARWIVGKVIGT) constitute a mitochondrion transit peptide.

Belongs to the universal ribosomal protein uS17 family. In terms of assembly, component of the mitochondrial small ribosomal subunit (mt-SSU). Mature mammalian 55S mitochondrial ribosomes consist of a small (28S) and a large (39S) subunit. The 28S small subunit contains a 12S ribosomal RNA (12S mt-rRNA) and 30 different proteins. The 39S large subunit contains a 16S rRNA (16S mt-rRNA), a copy of mitochondrial valine transfer RNA (mt-tRNA(Val)), which plays an integral structural role, and 52 different proteins.

It is found in the mitochondrion. The chain is Small ribosomal subunit protein uS17m (MRPS17) from Homo sapiens (Human).